The following is a 357-amino-acid chain: Neurogenic differentiation factor 1 (357 aa).

The disordered stretch occupies residues 1 to 94; that stretch reads MTKSYSESGL…GPKKKKMTKA (94 aa). Over residues 58 to 78 the composition is skewed to acidic residues; the sequence is EEEDEDEDLEEEEEEEEEEDD. A compositionally biased stretch (basic residues) spans 81–93; it reads PKRRGPKKKKMTK. A Nuclear localization signal motif is present at residues 87–93; it reads KKKKMTK. Residues 101 to 153 form the bHLH domain; it reads LRRMKANARERNRMHGLNAALDNLRKVVPCYSKTQKLSKIETLRLAKNYIWAL. Phosphoserine is present on residues Ser162, Ser259, Ser266, and Ser274. Phosphoserine; by CaMK2 is present on Ser336.

In terms of assembly, efficient DNA-binding requires dimerization with another bHLH protein. Heterodimer with TCF3/E47; the heterodimer is inhibited in presence of ID2, but not NR0B2, to E-box element. Interacts with EP300; the interaction is inhibited by NR0B2. Interacts with RREB1. Interacts with ATOH8. In terms of processing, phosphorylated by MAPK1; phosphorylation regulates heterodimerization and DNA-binding activities. Phosphorylation on Ser-266 and Ser-274 increases transactivation on the insulin promoter in glucose-stimulated insulinoma cells. Phosphorylated. In islet cells, phosphorylated on Ser-274 upon glucose stimulation; which may be required for nuclear localization. In activated neurons, phosphorylated on Ser-336 by CaMK2; which promotes dendritic growth.

It is found in the cytoplasm. The protein localises to the nucleus. Functionally, acts as a transcriptional activator: mediates transcriptional activation by binding to E box-containing promoter consensus core sequences 5'-CANNTG-3'. Associates with the p300/CBP transcription coactivator complex to stimulate transcription of the secretin gene as well as the gene encoding the cyclin-dependent kinase inhibitor CDKN1A. Contributes to the regulation of several cell differentiation pathways, like those that promote the formation of early retinal ganglion cells, inner ear sensory neurons, granule cells forming either the cerebellum or the dentate gyrus cell layer of the hippocampus, endocrine islet cells of the pancreas and enteroendocrine cells of the small intestine. Together with PAX6 or SIX3, is required for the regulation of amacrine cell fate specification. Also required for dendrite morphogenesis and maintenance in the cerebellar cortex. Associates with chromatin to enhancer regulatory elements in genes encoding key transcriptional regulators of neurogenesis. This Rattus norvegicus (Rat) protein is Neurogenic differentiation factor 1 (Neurod1).